The primary structure comprises 431 residues: Serine--tRNA ligase (431 aa).

Residue 237-239 participates in L-serine binding; that stretch reads TAE. 268–270 is a binding site for ATP; that stretch reads RSE. Glu291 contacts L-serine. Residue 355 to 358 coordinates ATP; sequence EISS. Ser390 provides a ligand contact to L-serine.

It belongs to the class-II aminoacyl-tRNA synthetase family. Type-1 seryl-tRNA synthetase subfamily. Homodimer. The tRNA molecule binds across the dimer.

It is found in the cytoplasm. The catalysed reaction is tRNA(Ser) + L-serine + ATP = L-seryl-tRNA(Ser) + AMP + diphosphate + H(+). It carries out the reaction tRNA(Sec) + L-serine + ATP = L-seryl-tRNA(Sec) + AMP + diphosphate + H(+). It functions in the pathway aminoacyl-tRNA biosynthesis; selenocysteinyl-tRNA(Sec) biosynthesis; L-seryl-tRNA(Sec) from L-serine and tRNA(Sec): step 1/1. Its function is as follows. Catalyzes the attachment of serine to tRNA(Ser). Is also able to aminoacylate tRNA(Sec) with serine, to form the misacylated tRNA L-seryl-tRNA(Sec), which will be further converted into selenocysteinyl-tRNA(Sec). The protein is Serine--tRNA ligase of Neisseria meningitidis serogroup A / serotype 4A (strain DSM 15465 / Z2491).